The following is a 503-amino-acid chain: Probable folate-biopterin transporter 6 (503 aa).

A run of 12 helical transmembrane segments spans residues 56 to 76 (SFVL…GSIF), 101 to 121 (LYYI…VFPI), 128 to 148 (PYFV…VVLG), 153 to 173 (ALAL…DVVI), 194 to 214 (LCMV…GVFV), 221 to 241 (GALG…FFIY), 281 to 301 (LYMF…FYWY), 314 to 334 (FVGI…LIYH), 344 to 364 (NILF…LVFI), 369 to 389 (LTLG…TKMI), 404 to 424 (LCPL…DSFG), and 450 to 470 (WLVI…VFLV).

The protein belongs to the major facilitator superfamily. Folate-biopterin transporter (TC 2.A.71) family.

It is found in the membrane. Functionally, could mediate folate transport. The chain is Probable folate-biopterin transporter 6 from Arabidopsis thaliana (Mouse-ear cress).